The chain runs to 515 residues: FADH(2)-dependent monooxygenase TftD (515 aa).

Residue 100 to 104 (RLPDA) participates in substrate binding. Residues 151 to 153 (LNF), 157 to 160 (QTDR), and Thr192 contribute to the FAD site. Residue 203–204 (GC) coordinates substrate. 457–460 (TMTR) contacts FAD.

This sequence belongs to the FADH(2)-utilizing monooxygenase family. As to quaternary structure, homotetramer. The chlorophenol-4-monooxygenase is composed of an oxygenase component TftD and a reductase component TftC.

Its pathway is xenobiotic degradation. Functionally, oxygenase component of a two-component system that degrades 2,4,5-trichlorophenol. Uses FADH(2) supplied by TftC to oxidize 2,4,5-trichlorophenol (2,4,5-TCP) to 2,5-dichloro-p-benzoquinone, which is chemically reduced to 2,5-dichloro-p-hydroquinone (2,5-DiCHQ). Then, TftD oxidizes the latter to 5-chloro-2-hydroxy-p-benzoquinone. The sequence is that of FADH(2)-dependent monooxygenase TftD (tftD) from Burkholderia cepacia (Pseudomonas cepacia).